The primary structure comprises 612 residues: Membrane protein insertase YidC (612 aa).

Transmembrane regions (helical) follow at residues 4-24, 329-349, 358-378, 434-454, 484-504, 524-544, and 546-566; these read NTIIGFILIFWVLFGFAYLNH, LVPLGWSLFRAINKCLIIPIF, VNLGLAILILTLIIKIALFPL, ILLQMPFLIALFMFFPSAIGL, FLGNHISLFCLLMSLATILNT, LTMYFMPVVMFFFLNSYPAGL, and YYYLISTLITIMQTIIFRGLV.

This sequence belongs to the OXA1/ALB3/YidC family. Type 1 subfamily. As to quaternary structure, interacts with the Sec translocase complex via SecD. Specifically interacts with transmembrane segments of nascent integral membrane proteins during membrane integration.

It is found in the cell inner membrane. Required for the insertion and/or proper folding and/or complex formation of integral membrane proteins into the membrane. Involved in integration of membrane proteins that insert both dependently and independently of the Sec translocase complex, as well as at least some lipoproteins. Aids folding of multispanning membrane proteins. The chain is Membrane protein insertase YidC from Azobacteroides pseudotrichonymphae genomovar. CFP2.